The following is a 329-amino-acid chain: 4-hydroxythreonine-4-phosphate dehydrogenase (329 aa).

Substrate-binding residues include His136 and Thr137. A divalent metal cation contacts are provided by His166, His211, and His266. Residues Lys274, Asn283, and Arg292 each contribute to the substrate site.

It belongs to the PdxA family. Homodimer. The cofactor is Zn(2+). It depends on Mg(2+) as a cofactor. Co(2+) serves as cofactor.

The protein localises to the cytoplasm. The catalysed reaction is 4-(phosphooxy)-L-threonine + NAD(+) = 3-amino-2-oxopropyl phosphate + CO2 + NADH. The protein operates within cofactor biosynthesis; pyridoxine 5'-phosphate biosynthesis; pyridoxine 5'-phosphate from D-erythrose 4-phosphate: step 4/5. Catalyzes the NAD(P)-dependent oxidation of 4-(phosphooxy)-L-threonine (HTP) into 2-amino-3-oxo-4-(phosphooxy)butyric acid which spontaneously decarboxylates to form 3-amino-2-oxopropyl phosphate (AHAP). This chain is 4-hydroxythreonine-4-phosphate dehydrogenase, found in Salmonella typhimurium (strain LT2 / SGSC1412 / ATCC 700720).